We begin with the raw amino-acid sequence, 301 residues long: Dimethylsulfoniopropionate lyase (301 aa).

Active-site proton donor/acceptor residues include Cys111 and Cys230.

The protein belongs to the aspartate/glutamate racemases family. ALMA1 subfamily. In terms of assembly, homotetramer.

It carries out the reaction S,S-dimethyl-beta-propiothetin = acrylate + dimethyl sulfide + H(+). Functionally, mediates cleavage of dimethylsulfoniopropionate (DMSP) into dimethyl sulfide (DMS) and acrylate. DMS is the principal form by which sulfur is transported from oceans to the atmosphere and is a key component of the ocean sulfur cycle. The protein is Dimethylsulfoniopropionate lyase of Durusdinium sp. clade D (Symbiodinium sp. clade D).